Here is a 326-residue protein sequence, read N- to C-terminus: ELAV-like protein 1-B (326 aa).

RRM domains lie at 20-98 (TNLI…FARP), 106-186 (ANLY…FAAN), and 244-322 (WCIF…FKTS).

The protein belongs to the RRM elav family. As to quaternary structure, interacts (via RRM3) with cirbp. Unable to form oligomers. Part of a ribonucleoprotein (RNP) complex, at least composed of elavl1/elrA and/or elavl2/elrB, igf2bp3/vg1RBP, ddx6/Xp54, ybx2/frgy2, lsm14b/rap55b and, in a subset of RNP complexes, stau1/staufen.

It is found in the cytoplasm. It localises to the cell cortex. Functionally, RNA-binding protein that binds to the 3'-UTR region of mRNAs and increases their stability. Involved in embryonic stem cells (ESCs) differentiation: preferentially binds mRNAs that are not methylated by N6-methyladenosine (m6A), stabilizing them, promoting ESCs differentiation. Binds to poly-U elements and AU-rich elements (AREs) in the 3'-UTR of target mRNAs. Acts cooperatively with cribp to stabilize AU-rich sequence (ARE)-containing mRNAs. May play a role during gastrulation. Required for the vegetal localization of vg1 mRNA. The chain is ELAV-like protein 1-B (elavl1-b) from Xenopus laevis (African clawed frog).